The chain runs to 134 residues: U34-theraphotoxin-Cg1a (134 aa).

An N-terminal signal peptide occupies residues Met-1 to Ser-19. 3 cysteine pairs are disulfide-bonded: Cys-24-Cys-35, Cys-29-Cys-53, and Cys-63-Cys-84. Residues Glu-97–Lys-134 form a disordered region. A compositionally biased stretch (low complexity) spans Ser-99–Lys-134.

The protein belongs to the neurotoxin 32 family. In terms of tissue distribution, expressed by the venom gland.

Its subcellular location is the secreted. The protein is U34-theraphotoxin-Cg1a of Chilobrachys guangxiensis (Chinese earth tiger tarantula).